The chain runs to 269 residues: Sulfur carrier protein FdhD (269 aa).

Catalysis depends on C111, which acts as the Cysteine persulfide intermediate.

This sequence belongs to the FdhD family.

It localises to the cytoplasm. Required for formate dehydrogenase (FDH) activity. Acts as a sulfur carrier protein that transfers sulfur from IscS to the molybdenum cofactor prior to its insertion into FDH. The sequence is that of Sulfur carrier protein FdhD from Brucella melitensis biotype 1 (strain ATCC 23456 / CCUG 17765 / NCTC 10094 / 16M).